The primary structure comprises 176 residues: Sigma intracellular receptor 2 (176 aa).

The Cytoplasmic segment spans residues 1–9 (MGAPATRRC). A helical membrane pass occupies residues 10–30 (VEWLLGLYFLSHIPITLFMDL). The EXPERA domain maps to 10–158 (VEWLLGLYFL…PYLLIPFILL (149 aa)). Topologically, residues 31-68 (QAVLPRELYPVEFRNLLKWYAKEFKDPLLQEPPAWFKS) are lumenal. Residues 69-89 (FLFCELVFQLPFFPIATYAFL) traverse the membrane as a helical segment. Valine 75 and glutamine 77 together coordinate cholesterol. At 90–99 (KGSCKWIRTP) the chain is on the cytoplasmic side. The chain crosses the membrane as a helical span at residues 100–120 (AIIYSVHTMTTLIPILSTFLF). Residues 108–176 (MTTLIPILST…YKYEEKRKKK (69 aa)) are required for interaction with Hst1/HTN1. Residues 121–140 (EDFSKASGFKGQRPETLHER) lie on the Lumenal side of the membrane. A helical transmembrane segment spans residues 141–161 (LTLVSVYAPYLLIPFILLIFM). At 162-176 (LRSPYYKYEEKRKKK) the chain is on the cytoplasmic side. Positions 172 to 176 (KRKKK) match the ER retention motif motif.

Belongs to the TMEM97/sigma-2 receptor family. In terms of assembly, homodimer. Interacts with NPC1; the interaction impairs NPC1-mediated cholesterol transport. Interacts with PGRMC1 and LDLR; the interaction increases LDL internalization. Interacts with histatin 1/HTN1; the interaction induces HTN1-stimulating wound healing. Interacts with TSPO. Forms a complex with TSPO and PGRMC1; the interaction occurs in MIA PaCa-2 cells but not in MCF7 cells. As to expression, widely expressed in normal tissues. Expressed in pancreatic, renal, breast, colon, ovarian surface epithelial (OSE) cells. Highly expressed in various proliferating cancer cells.

It localises to the rough endoplasmic reticulum membrane. The protein localises to the nucleus membrane. Sigma-2 receptor which contributes to ameliorate dysfunctional cellular processes and slow degenerative progression by regulating cell functions including cholesterol biosynthesis/trafficking, membrane trafficking, autophagy, lipid membrane-bound protein trafficking, and receptor stabilization at the cell surface. Forms a ternary complex with PGRMC1 receptor and low density lipoprotein receptor/LDLR at the plasma membrane, which increases LDLR-mediated LDL cholesterol internalization. Decreases lysosomal sterol transporter NPC1 availability to the cell, probably through NPC1-binding, hence controlling lipid transport, including cholesterol and LBPA, outside of late endosome/lysosome. Binds regio- and stereoselective ligand 20(S)-hydroxycholesterol (20(S)-OHC) which enhances TMEM97-NPC1 interaction and decreases TMEM97-PGRMC1 and TMEM97-TSPO interactions, thereby linking OHC binding to cholesterol homeostasis. Also able to bind cholesterol. Binds histatin 1 (Hst 1)/HN1 salivary peptide at the ER membrane, which is critical for increasing mitochondria-ER contacts and stimulating Hst1 wound healing properties. May alter the activity of some cytochrome P450 proteins. Although shows homologies with sterol isomerases (EXPERA domain), not able to catalyze sterol isomerization. However, may act as sensors of these molecules. Acts as a quality control factor in the ER, promoting the proteolytic degradation of nonproductive and extramitochondrial precursor proteins in the ER membrane thus removing them from the ER surface. This Homo sapiens (Human) protein is Sigma intracellular receptor 2.